The primary structure comprises 416 residues: Chromate transport protein (416 aa).

The segment at 1–21 (MSVANEESYRPSKATDATTEA) is disordered. 11 helical membrane-spanning segments follow: residues 99–119 (LGGV…MFAL), 128–148 (FVGT…IALI), 160–177 (LLDR…LAAI), 181–198 (DFWI…LLVL), 204–224 (ALLV…WAAP), 237–257 (ASVL…FGGA), 283–303 (LALS…VGYV), 308–328 (IGAV…SLIF), 341–361 (LHAF…ATTI), 371–391 (VPSL…LYAW), and 395–415 (LNVV…FPNQ).

The protein belongs to the chromate ion transporter (CHR) (TC 2.A.51) family.

The protein localises to the cell inner membrane. This protein reduces chromate accumulation and is essential for chromate resistance. This chain is Chromate transport protein, found in Pseudomonas aeruginosa.